Reading from the N-terminus, the 220-residue chain is Glutathione S-transferase (220 aa).

The region spanning 1–77 is the GST N-terminal domain; that stretch reads MLKLHGFSVS…YIEQTQSGKA (77 aa). Residues Tyr12, Val49, and 61–62 each bind glutathione; that span reads ET. The GST C-terminal domain occupies 82–211; sequence DPFEQAKVRE…ADKEASMPAF (130 aa).

This sequence belongs to the GST superfamily. In terms of assembly, monomer and homodimer.

Its subcellular location is the cytoplasm. The catalysed reaction is RX + glutathione = an S-substituted glutathione + a halide anion + H(+). Its function is as follows. Conjugation of reduced glutathione to a wide number of exogenous and endogenous hydrophobic electrophiles. This Pseudomonas putida (strain ATCC 700007 / DSM 6899 / JCM 31910 / BCRC 17059 / LMG 24140 / F1) protein is Glutathione S-transferase.